A 344-amino-acid chain; its full sequence is MPKYPLLGMTLTELQSVTKDLGMPAFAAKQIASWLYDKKVTSIDEMTNLSLKHRELLKGEYDLGISAPVDEMRSVDGTVKYLYQVSDNHFVEAVYIPDEDRATLCVSSQVGCKMNCKFCMTGKQGFTASLTANQILNQIAALPERDKLTNVVMMGMGEPLDNLDEVLKALHILTASYGYGWSPKRITLSSVGLRKGLQRFIEESECHLAISLHSPFPSQRSELMPAERAFSIKEMVDLLKNYDFSKQRRLSFEYIVFKGVNDSLIYAKELLKLLRGLDCRVNLIRFHAIPGVDLEGAGMETMTSFRDYLTSHGLFTTIRASRGEDIFAACGMLSTAKQEESNKN.

E92 serves as the catalytic Proton acceptor. In terms of domain architecture, Radical SAM core spans 98-325 (DEDRATLCVS…TTIRASRGED (228 aa)). Residues C105 and C330 are joined by a disulfide bond. C112, C116, and C119 together coordinate [4Fe-4S] cluster. S-adenosyl-L-methionine is bound by residues 157-158 (GE), S189, 211-213 (SLH), and H287. C330 (S-methylcysteine intermediate) is an active-site residue.

This sequence belongs to the radical SAM superfamily. RlmN family. The cofactor is [4Fe-4S] cluster.

The protein resides in the cytoplasm. The catalysed reaction is adenosine(2503) in 23S rRNA + 2 reduced [2Fe-2S]-[ferredoxin] + 2 S-adenosyl-L-methionine = 2-methyladenosine(2503) in 23S rRNA + 5'-deoxyadenosine + L-methionine + 2 oxidized [2Fe-2S]-[ferredoxin] + S-adenosyl-L-homocysteine. The enzyme catalyses adenosine(37) in tRNA + 2 reduced [2Fe-2S]-[ferredoxin] + 2 S-adenosyl-L-methionine = 2-methyladenosine(37) in tRNA + 5'-deoxyadenosine + L-methionine + 2 oxidized [2Fe-2S]-[ferredoxin] + S-adenosyl-L-homocysteine. Specifically methylates position 2 of adenine 2503 in 23S rRNA and position 2 of adenine 37 in tRNAs. The protein is Probable dual-specificity RNA methyltransferase RlmN of Bacteroides fragilis (strain ATCC 25285 / DSM 2151 / CCUG 4856 / JCM 11019 / LMG 10263 / NCTC 9343 / Onslow / VPI 2553 / EN-2).